The sequence spans 341 residues: MSRLDLKNGSVEMVHGSGGRAMGQLIEELFARALRNQWLDQGNDQAQFELPPGRVVMATDSHVISPLFFPGGDIGSLAVHGTINDVAMAGARPCYLAAGFILEEGFPLADLARIVESMAAAAREAGVPVVTGDTKVVERGKGDGVFITTTGVGVVPPGLYLSGDRARPGDRILLSGSIGDHGVTILSLREGLGFEADIGSDSQALHGLVAAMVEAVPEIRCLRDPTRGGLGNTLNELARQSGVGMQLVERAIPLREPVRAACEFLGLDPLYVANEGKLIAICPAEQAERLLEVMREHPQGREAAIIGTVVADAQCFVQMETLFGGSRMVDWLNGEQLPRMC.

It belongs to the HypE family.

Functionally, may be involved in the maturation of the NifE hydrogenase. The chain is Hydrogenase expression/formation protein HupE (hupE) from Azotobacter chroococcum mcd 1.